The following is a 392-amino-acid chain: 23S rRNA (uracil(747)-C(5))-methyltransferase RlmC (392 aa).

Cysteine 4, cysteine 12, cysteine 15, and cysteine 93 together coordinate [4Fe-4S] cluster. S-adenosyl-L-methionine is bound by residues glutamine 218, phenylalanine 247, glutamate 275, and asparagine 321. Cysteine 348 serves as the catalytic Nucleophile.

The protein belongs to the class I-like SAM-binding methyltransferase superfamily. RNA M5U methyltransferase family. RlmC subfamily.

It carries out the reaction uridine(747) in 23S rRNA + S-adenosyl-L-methionine = 5-methyluridine(747) in 23S rRNA + S-adenosyl-L-homocysteine + H(+). Its function is as follows. Catalyzes the formation of 5-methyl-uridine at position 747 (m5U747) in 23S rRNA. The protein is 23S rRNA (uracil(747)-C(5))-methyltransferase RlmC of Haemophilus influenzae (strain ATCC 51907 / DSM 11121 / KW20 / Rd).